We begin with the raw amino-acid sequence, 905 residues long: Microtubule-associated protein 10 (905 aa).

7 disordered regions span residues 30–51, 199–235, 329–362, 434–458, 547–586, 721–772, and 786–855; these read AAAV…SSPR, TRTG…KPLG, APEE…AHEH, SPES…GGCE, SSAE…FDEP, RSFK…GSPV, and KSLE…SSYL. A compositionally biased stretch (acidic residues) spans 34 to 43; it reads EQEEEEEEKE. Residues 208–227 show a composition bias toward low complexity; it reads SPQTQQERQQLQQPASQPSP. Residues 443-453 are compositionally biased toward basic and acidic residues; that stretch reads CRSEAKKDKRS. Residues 567–579 are compositionally biased toward polar residues; it reads ASFTENSDTSRQI. Residues 721 to 736 show a composition bias toward basic and acidic residues; the sequence is RSFKAHDSSSRTENPK. Polar residues predominate over residues 737–748; sequence HSQYTSKSSDTG. Low complexity predominate over residues 790 to 801; that stretch reads EASSISASDLSS. Positions 830-855 are enriched in polar residues; it reads SVKTRSSWKSLEKSQSPQTSQVSSYL.

In terms of assembly, interacts (via middle region) with microtubules. Expressed in different cell lines (at protein level).

Its subcellular location is the cytoplasm. The protein localises to the cytoskeleton. The protein resides in the spindle pole. It is found in the microtubule organizing center. It localises to the centrosome. Its subcellular location is the midbody. Functionally, microtubule-associated protein (MAP) that plays a role in the regulation of cell division; promotes microtubule stability and participates in the organization of the spindle midzone and normal progress of cytokinesis. In Homo sapiens (Human), this protein is Microtubule-associated protein 10 (MAP10).